The primary structure comprises 755 residues: Photosystem I P700 chlorophyll a apoprotein A1 (755 aa).

Transmembrane regions (helical) follow at residues 72–95 (IFSA…FHGA), 158–181 (LYCT…FHYH), 197–221 (LNHH…HVSL), 297–315 (TAHH…GHMY), 352–375 (WHAQ…QHMY), 391–417 (LSLF…IFMV), 439–461 (AIIS…LYVH), and 536–554 (FMVH…LILL). Residues cysteine 578 and cysteine 587 each contribute to the [4Fe-4S] cluster site. A run of 2 helical transmembrane segments spans residues 594–615 (HVFL…HFSW) and 669–691 (LSAY…MFLF). Histidine 680 contributes to the chlorophyll a' binding site. Chlorophyll a is bound by residues methionine 688 and tyrosine 696. Tryptophan 697 is a binding site for phylloquinone. Residues 729 to 749 (AVGVAHYLLGGIATTWAFFLA) traverse the membrane as a helical segment.

The protein belongs to the PsaA/PsaB family. In terms of assembly, the PsaA/B heterodimer binds the P700 chlorophyll special pair and subsequent electron acceptors. PSI consists of a core antenna complex that captures photons, and an electron transfer chain that converts photonic excitation into a charge separation. The cyanobacterial PSI reaction center is composed of one copy each of PsaA,B,C,D,E,F,I,J,K,L,M and X, and forms trimeric complexes. PSI electron transfer chain: 5 chlorophyll a, 1 chlorophyll a', 2 phylloquinones and 3 4Fe-4S clusters. PSI core antenna: 90 chlorophyll a, 22 carotenoids, 3 phospholipids and 1 galactolipid. P700 is a chlorophyll a/chlorophyll a' dimer, A0 is one or more chlorophyll a, A1 is one or both phylloquinones and FX is a shared 4Fe-4S iron-sulfur center. is required as a cofactor.

The protein localises to the cellular thylakoid membrane. It carries out the reaction reduced [plastocyanin] + hnu + oxidized [2Fe-2S]-[ferredoxin] = oxidized [plastocyanin] + reduced [2Fe-2S]-[ferredoxin]. PsaA and PsaB bind P700, the primary electron donor of photosystem I (PSI), as well as the electron acceptors A0, A1 and FX. PSI is a plastocyanin/cytochrome c6-ferredoxin oxidoreductase, converting photonic excitation into a charge separation, which transfers an electron from the donor P700 chlorophyll pair to the spectroscopically characterized acceptors A0, A1, FX, FA and FB in turn. Oxidized P700 is reduced on the lumenal side of the thylakoid membrane by plastocyanin or cytochrome c6. The polypeptide is Photosystem I P700 chlorophyll a apoprotein A1 (Thermostichus vulcanus (Synechococcus vulcanus)).